A 377-amino-acid polypeptide reads, in one-letter code: Succinyl-diaminopimelate desuccinylase (377 aa).

Zn(2+) is bound at residue H66. Residue D68 is part of the active site. D99 is a Zn(2+) binding site. E133 serves as the catalytic Proton acceptor. Zn(2+) is bound by residues E134, E163, and H349.

The protein belongs to the peptidase M20A family. DapE subfamily. In terms of assembly, homodimer. Zn(2+) serves as cofactor. The cofactor is Co(2+).

The catalysed reaction is N-succinyl-(2S,6S)-2,6-diaminopimelate + H2O = (2S,6S)-2,6-diaminopimelate + succinate. The protein operates within amino-acid biosynthesis; L-lysine biosynthesis via DAP pathway; LL-2,6-diaminopimelate from (S)-tetrahydrodipicolinate (succinylase route): step 3/3. In terms of biological role, catalyzes the hydrolysis of N-succinyl-L,L-diaminopimelic acid (SDAP), forming succinate and LL-2,6-diaminopimelate (DAP), an intermediate involved in the bacterial biosynthesis of lysine and meso-diaminopimelic acid, an essential component of bacterial cell walls. The sequence is that of Succinyl-diaminopimelate desuccinylase from Legionella pneumophila (strain Paris).